Here is an 87-residue protein sequence, read N- to C-terminus: Probable Fe(2+)-trafficking protein (87 aa).

The protein belongs to the Fe(2+)-trafficking protein family.

Could be a mediator in iron transactions between iron acquisition and iron-requiring processes, such as synthesis and/or repair of Fe-S clusters in biosynthetic enzymes. The chain is Probable Fe(2+)-trafficking protein from Francisella tularensis subsp. holarctica (strain FTNF002-00 / FTA).